Reading from the N-terminus, the 164-residue chain is Protein 4 (164 aa).

The polypeptide is Protein 4 (Lettuce big-vein associated virus (isolate Japan/Kagawa) (LBVaV)).